The following is a 157-amino-acid chain: Protein Smg homolog (157 aa).

It belongs to the Smg family.

This Aeromonas hydrophila subsp. hydrophila (strain ATCC 7966 / DSM 30187 / BCRC 13018 / CCUG 14551 / JCM 1027 / KCTC 2358 / NCIMB 9240 / NCTC 8049) protein is Protein Smg homolog.